Here is a 199-residue protein sequence, read N- to C-terminus: Charged multivesicular body protein 1b (199 aa).

Residues 26-48 (DKEEKAEKAKIKKAIQKGNMEVA) are a coiled coil. The segment at 132 to 156 (MEDTMSSTTTLTTPQNQVDMLLQEM) is interaction with IST1. The disordered stretch occupies residues 167 to 199 (ELPQGQTGSVGTSVASAEQDELSQRLARLRDQV). Residues 170–182 (QGQTGSVGTSVAS) show a composition bias toward polar residues. Residues 174–199 (GSVGTSVASAEQDELSQRLARLRDQV) form an interaction with SPAST region. Residues 178 to 199 (TSVASAEQDELSQRLARLRDQV) are a coiled coil. An interaction with VPS4A, MITD1 and STAMBP region spans residues 180-196 (VASAEQDELSQRLARLR). The interval 180–199 (VASAEQDELSQRLARLRDQV) is interaction with VTA1. Residues 183-199 (AEQDELSQRLARLRDQV) form an interaction with VPS4B region. Residues 186 to 196 (DELSQRLARLR) carry the MIT-interacting motif motif.

It belongs to the SNF7 family. As to quaternary structure, probable peripherally associated component of the endosomal sorting required for transport complex III (ESCRT-III). ESCRT-III components are thought to multimerize to form a flat lattice on the perimeter membrane of the endosome. Several assembly forms of ESCRT-III may exist that interact and act sequentially. Interacts with CHMP1A. Interacts with VTA1; the interaction probably involves the open conformation of CHMP1B. Interacts with CHMP2A. Interacts with VPS4A; the interaction is direct. Interacts with VPS4B; the interaction is direct. Interacts with SPAST (via MIT domain); the interaction is direct. Interacts with IST1. Interacts with MITD1. Interacts with STAMBP. As to expression, widely expressed. Expressed in pancreas, kidney, skeletal muscle, liver, lung, placenta and brain.

It localises to the cytoplasm. The protein resides in the cytosol. The protein localises to the endosome. Its subcellular location is the late endosome membrane. Probable peripherally associated component of the endosomal sorting required for transport complex III (ESCRT-III) which is involved in multivesicular bodies (MVBs) formation and sorting of endosomal cargo proteins into MVBs. MVBs contain intraluminal vesicles (ILVs) that are generated by invagination and scission from the limiting membrane of the endosome and mostly are delivered to lysosomes enabling degradation of membrane proteins, such as stimulated growth factor receptors, lysosomal enzymes and lipids. The MVB pathway appears to require the sequential function of ESCRT-O, -I,-II and -III complexes. ESCRT-III proteins mostly dissociate from the invaginating membrane before the ILV is released. The ESCRT machinery also functions in topologically equivalent membrane fission events, such as the terminal stages of cytokinesis and the budding of enveloped viruses (HIV-1 and other lentiviruses). ESCRT-III proteins are believed to mediate the necessary vesicle extrusion and/or membrane fission activities, possibly in conjunction with the AAA ATPase VPS4. Involved in cytokinesis. Involved in recruiting VPS4A and/or VPS4B and SPAST to the midbody of dividing cells. Involved in HIV-1 p6- and p9-dependent virus release. This is Charged multivesicular body protein 1b (CHMP1B) from Homo sapiens (Human).